The sequence spans 545 residues: Chaperonin GroEL 2 (545 aa).

Residues 29–32, 86–90, G413, 479–481, and D495 contribute to the ATP site; these read TLGP, DGTTT, and NAA.

Belongs to the chaperonin (HSP60) family. In terms of assembly, forms a cylinder of 14 subunits composed of two heptameric rings stacked back-to-back. Interacts with the co-chaperonin GroES.

Its subcellular location is the cytoplasm. It carries out the reaction ATP + H2O + a folded polypeptide = ADP + phosphate + an unfolded polypeptide.. Together with its co-chaperonin GroES, plays an essential role in assisting protein folding. The GroEL-GroES system forms a nano-cage that allows encapsulation of the non-native substrate proteins and provides a physical environment optimized to promote and accelerate protein folding. The chain is Chaperonin GroEL 2 from Prochlorococcus marinus (strain MIT 9301).